The primary structure comprises 858 residues: Translation initiation factor IF-2 (858 aa).

Residues 49–271 form a disordered region; sequence TTTVTHPKSQ…NKPAPVRKDK (223 aa). The segment covering 80 to 226 has biased composition (low complexity); that stretch reads NQQQSNSRHQ…RFGGSLNSNN (147 aa). The span at 239–256 shows a compositional bias: basic residues; that stretch reads NRRRNNRNNKSRNNKNQR. A tr-type G domain is found at 359–528; sequence PRAPVVTVMG…LLQSEVLELT (170 aa). Residues 368–375 form a G1 region; sequence GHVDHGKT. 368-375 is a GTP binding site; it reads GHVDHGKT. The tract at residues 393 to 397 is G2; sequence GITQA. Positions 414–417 are G3; it reads DTPG. Residues 414–418 and 468–471 contribute to the GTP site; these read DTPGH and NKID. The G4 stretch occupies residues 468–471; the sequence is NKID. The interval 504–506 is G5; that stretch reads SAK.

This sequence belongs to the TRAFAC class translation factor GTPase superfamily. Classic translation factor GTPase family. IF-2 subfamily.

The protein resides in the cytoplasm. In terms of biological role, one of the essential components for the initiation of protein synthesis. Protects formylmethionyl-tRNA from spontaneous hydrolysis and promotes its binding to the 30S ribosomal subunits. Also involved in the hydrolysis of GTP during the formation of the 70S ribosomal complex. The polypeptide is Translation initiation factor IF-2 (Lactiplantibacillus plantarum (strain ATCC BAA-793 / NCIMB 8826 / WCFS1) (Lactobacillus plantarum)).